A 431-amino-acid chain; its full sequence is Serine/threonine-protein kinase Sgk1 (431 aa).

The interval 58 to 93 is disordered; the sequence is LNLTPPQDPELMNSNPSPPPSPSQQINLGPSSNPSA. Residues 81 to 93 show a composition bias toward polar residues; the sequence is QQINLGPSSNPSA. In terms of domain architecture, Protein kinase spans 98-355; sequence FHFLKVIGKG…FTEIKNHVFF (258 aa). Residues 104–112 and Lys127 contribute to the ATP site; that span reads IGKGSFGKV. The active-site Proton acceptor is the Asp222. Residues 356-431 enclose the AGC-kinase C-terminal domain; that stretch reads SPINWDDLNA…SYAPSMDSYL (76 aa).

The protein belongs to the protein kinase superfamily. AGC Ser/Thr protein kinase family.

It is found in the cytoplasm. The protein resides in the nucleus. It localises to the endoplasmic reticulum. The catalysed reaction is L-seryl-[protein] + ATP = O-phospho-L-seryl-[protein] + ADP + H(+). It catalyses the reaction L-threonyl-[protein] + ATP = O-phospho-L-threonyl-[protein] + ADP + H(+). Its function is as follows. Protein kinase that may play an important role in cellular stress response. May be involved in the regulation of processes such as cell survival, neuronal excitability and renal sodium excretion. The protein is Serine/threonine-protein kinase Sgk1 (sgk1) of Fundulus heteroclitus (Killifish).